The following is a 907-amino-acid chain: Interference hedgehog (907 aa).

Positions 1 to 23 are cleaved as a signal peptide; the sequence is MSLTRRFSLTLLLLLPLLTSLLA. Topologically, residues 24 to 709 are extracellular; that stretch reads AIPVLQANLS…SHNETFNMNP (686 aa). Ig-like C2-type domains lie at 42-149, 152-233, 252-340, and 346-433; these read PGVR…ASIS, GADT…VRLA, PALL…FIEL, and PRIL…LQVN. 3 disulfides stabilise this stretch: C65-C127, C173-C221, and C276-C324. Residues N101, N203, N300, and N355 are each glycosylated (N-linked (GlcNAc...) asparagine). C367 and C415 are oxidised to a cystine. The tract at residues 427-474 is disordered; it reads GTLLQVNPKQLPDGEGTGMDSGRSSARPTHSRKQKQQTQMVPPSAPNV. Polar residues predominate over residues 462-474; the sequence is QQTQMVPPSAPNV. Fibronectin type-III domains are found at residues 468-578 and 586-681; these read PPSA…LQRG and VPEL…TQRP. N473 carries an N-linked (GlcNAc...) asparagine glycan. Positions 504, 511, and 513 each coordinate heparin. 2 N-linked (GlcNAc...) asparagine glycosylation sites follow: N537 and N548. Residue R552 coordinates heparin. N568 is a glycosylation site (N-linked (GlcNAc...) asparagine). Residues 676–688 show a composition bias toward polar residues; sequence GRTQRPRASSTPQ. The tract at residues 676-701 is disordered; it reads GRTQRPRASSTPQPVLHAVDTTTPSH. A glycan (N-linked (GlcNAc...) asparagine) is linked at N702. A helical membrane pass occupies residues 710 to 730; the sequence is MLTGTIGGGALLVLLVISACL. Residues 731-907 are Cytoplasmic-facing; the sequence is CLCRRRSSRG…SSGSLNSVGV (177 aa). Disordered stretches follow at residues 780–805 and 829–881; these read AQQQ…QDND and MSSS…NKPG. Composition is skewed to low complexity over residues 781–794 and 853–863; these read QQQQ…LQQQ and NNNNLNQPGDG. Over residues 865-878 the composition is skewed to polar residues; it reads LANSADSPRLQASN.

The protein belongs to the immunoglobulin superfamily. IHOG family. Homodimer. Heterotetramer; 2 iHog chains bind 2 hh chains when facilitated by heparin, heparin is required to promote high-affinity interactions between hh and iHog.

The protein resides in the membrane. In terms of biological role, mediates response to the active Hedgehog (Hh) protein signal in embryos, functioning upstream or at the level of patched (ptc). This is Interference hedgehog from Drosophila virilis (Fruit fly).